Here is a 337-residue protein sequence, read N- to C-terminus: Glucose transporter 2C (337 aa).

The interval 1–22 (MTERRDNVSHAPDAIEGPNDGA) is disordered. Over 1–43 (MTERRDNVSHAPDAIEGPNDGAHAEDTSPGFFSLENLGVAQVQ) the chain is Cytoplasmic. Residues 44-64 (VVGGTLNGFSIGFVAVYILLY) traverse the membrane as a helical segment. The Extracellular portion of the chain corresponds to 65-119 (EVATNCSLFKTTEACKAVGSYGCEWKDTEVCSWKKECDSDSDGVNPCESLIGYSS). Asparagine 69 carries an N-linked (GlcNAc...) asparagine glycan. Residues 120 to 140 (LYSGIFASAMIVGSMVGSIIA) traverse the membrane as a helical segment. Topologically, residues 141–152 (GKCITMFGLKKS) are cytoplasmic. A helical transmembrane segment spans residues 153–173 (FIIVGVMSVVASALNHISVAT). The Extracellular portion of the chain corresponds to 174-175 (NE). Residues 176-196 (FWVLCAGRVLMGIGLGVVCVI) form a helical membrane-spanning segment. The Cytoplasmic segment spans residues 197–214 (CPMYVNENAHPKLSKVDG). A helical membrane pass occupies residues 215–235 (VLFQVFITFGIMLAAMLGLIL). Residues 236–250 (DKTVNYDNDPDMAGR) are Extracellular-facing. Residues 251 to 271 (FHGFCAVSSVLSVAMFLVGMF) traverse the membrane as a helical segment. Over 272 to 300 (LRESTATFSQDDDGKADGGMDPNEYGWGQ) the chain is Cytoplasmic. Residues 301–321 (MLWPLFMGAVTAGTLQLTGIN) traverse the membrane as a helical segment. Residues 322–337 (AVMNYAPKITENLGMD) are Extracellular-facing.

It belongs to the major facilitator superfamily. Sugar transporter (TC 2.A.1.1) family.

Its subcellular location is the membrane. Functionally, facilitative glucose transporter. This chain is Glucose transporter 2C (THT2C), found in Trypanosoma brucei brucei.